A 239-amino-acid chain; its full sequence is Transcriptional regulatory protein BtsR (239 aa).

In terms of domain architecture, Response regulatory spans 3 to 116; sequence KVLIVDDEPL…RLEKTLHRLR (114 aa). Asp54 carries the 4-aspartylphosphate modification. An HTH LytTR-type domain is found at 137–239; it reads IPCTGHSRIY…LKSLKEAIGL (103 aa).

In terms of processing, phosphorylated by BtsS.

Its function is as follows. Member of the two-component regulatory system BtsS/BtsR. BtsR regulates expression of btsT by binding to its promoter region. The polypeptide is Transcriptional regulatory protein BtsR (Salmonella typhi).